A 388-amino-acid chain; its full sequence is LL-diaminopimelate aminotransferase (388 aa).

Positions 16 and 41 each coordinate substrate. Residues tyrosine 70, serine 104–lysine 105, tyrosine 129, asparagine 179, tyrosine 210, and serine 239–serine 241 each bind pyridoxal 5'-phosphate. Substrate is bound by residues lysine 105, tyrosine 129, and asparagine 179. Lysine 242 bears the N6-(pyridoxal phosphate)lysine mark. Position 250 (arginine 250) interacts with pyridoxal 5'-phosphate. Arginine 368 is a substrate binding site.

Belongs to the class-I pyridoxal-phosphate-dependent aminotransferase family. LL-diaminopimelate aminotransferase subfamily. In terms of assembly, homodimer. Requires pyridoxal 5'-phosphate as cofactor.

It carries out the reaction (2S,6S)-2,6-diaminopimelate + 2-oxoglutarate = (S)-2,3,4,5-tetrahydrodipicolinate + L-glutamate + H2O + H(+). It participates in amino-acid biosynthesis; L-lysine biosynthesis via DAP pathway; LL-2,6-diaminopimelate from (S)-tetrahydrodipicolinate (aminotransferase route): step 1/1. In terms of biological role, involved in the synthesis of meso-diaminopimelate (m-DAP or DL-DAP), required for both lysine and peptidoglycan biosynthesis. Catalyzes the direct conversion of tetrahydrodipicolinate to LL-diaminopimelate. The polypeptide is LL-diaminopimelate aminotransferase (Maridesulfovibrio salexigens (strain ATCC 14822 / DSM 2638 / NCIMB 8403 / VKM B-1763) (Desulfovibrio salexigens)).